The sequence spans 1217 residues: Inactive disease resistance protein RPS4 (1217 aa).

The TIR domain occupies 14–175 (PQHQVFINFR…EIVKAVKTAL (162 aa)). Residue E88 is part of the active site. One can recognise an NB-ARC domain in the interval 211–472 (EQRLKDLEEK…FRSQDKDYVE (262 aa)). LRR repeat units follow at residues 260 to 285 (HALIDQIRVKSKHLELDRLPQMLLGE), 436 to 459 (PNIVSVFQVSYDELTTAQKDAFLD), 614 to 636 (LKEVRCLHWLKFPLETLPNDFNP), 637 to 659 (INLVDLKLPYSEMEQLWEGDKDT), 682 to 706 (AEKLQRLNLEGCTTLKAFPHDMKKM), 708 to 728 (MLAFLNLKGCTSLESLPEMNL), 729 to 749 (ISLKTLTLSGCSTFKEFPLIS), 750 to 774 (DNIETLYLDGTAISQLPMNMEKLQR), 796 to 818 (LKALQELILSDCLNLKIFPEIDI), 819 to 842 (SFLNILLLDGTAIEVMPQLPSVQY), and 861 to 887 (LSQLKWLDLKYCTSLTSVPEFPPNLQC). The tract at residues 1162-1195 (TEGVDGRVKKKKKTRMDNGRPKKKQRSGRDDNQT) is disordered. Positions 1170-1177 (KKKKKTRM) match the Nuclear localization signal motif.

In terms of assembly, interacts with EDS1.

It is found in the nucleus. The enzyme catalyses NAD(+) + H2O = ADP-D-ribose + nicotinamide + H(+). This Arabidopsis thaliana (Mouse-ear cress) protein is Inactive disease resistance protein RPS4 (RPS4).